A 390-amino-acid polypeptide reads, in one-letter code: GTPase Obg (390 aa).

The region spanning 1–159 (MKFVDEASIL…RDLLLELMLL (159 aa)) is the Obg domain. The tract at residues 127 to 147 (NTRFKSSVNRTPRQKTNGTPG) is disordered. Residues 129-145 (RFKSSVNRTPRQKTNGT) are compositionally biased toward polar residues. The region spanning 160–333 (ADVGMLGMPN…LCWDVMTFII (174 aa)) is the OBG-type G domain. Residues 166–173 (GMPNAGKS), 191–195 (FTTLV), 213–216 (DIPG), 283–286 (NKID), and 314–316 (SAA) contribute to the GTP site. Residues Ser-173 and Thr-193 each contribute to the Mg(2+) site.

Belongs to the TRAFAC class OBG-HflX-like GTPase superfamily. OBG GTPase family. In terms of assembly, monomer. Mg(2+) serves as cofactor.

The protein localises to the cytoplasm. In terms of biological role, an essential GTPase which binds GTP, GDP and possibly (p)ppGpp with moderate affinity, with high nucleotide exchange rates and a fairly low GTP hydrolysis rate. Plays a role in control of the cell cycle, stress response, ribosome biogenesis and in those bacteria that undergo differentiation, in morphogenesis control. This is GTPase Obg from Salmonella gallinarum (strain 287/91 / NCTC 13346).